The chain runs to 580 residues: Protein O-linked-mannose beta-1,4-N-acetylglucosaminyltransferase 2 (580 aa).

Over 1 to 4 the chain is Cytoplasmic; that stretch reads MHLS. The helical; Signal-anchor for type II membrane protein transmembrane segment at 5-25 threads the bilayer; that stretch reads AVFNALLVSVLAAVLWKHVRL. Residues 26–580 are Lumenal-facing; the sequence is REHAATLEEE…PFADVLVCNT (555 aa). Asparagine 99 and asparagine 276 each carry an N-linked (GlcNAc...) asparagine glycan. The Fibronectin type-III domain occupies 488–580; the sequence is ARCQASVHGA…PFADVLVCNT (93 aa).

It belongs to the glycosyltransferase 61 family.

It localises to the endoplasmic reticulum membrane. It carries out the reaction 3-O-(alpha-D-mannosyl)-L-threonyl-[protein] + UDP-N-acetyl-alpha-D-glucosamine = 3-O-(N-acetyl-beta-D-glucosaminyl-(1-&gt;4)-alpha-D-mannosyl)-L-threonyl-[protein] + UDP + H(+). It functions in the pathway protein modification; protein glycosylation. Its function is as follows. O-linked mannose beta-1,4-N-acetylglucosaminyltransferase that transfers UDP-N-acetyl-D-glucosamine to the 4-position of the mannose to generate N-acetyl-D-glucosamine-beta-1,4-O-D-mannosylprotein. Involved in the biosynthesis of the phosphorylated O-mannosyl trisaccharide (N-acetylgalactosamine-beta-3-N-acetylglucosamine-beta-4-(phosphate-6-)mannose), a carbohydrate structure present in alpha-dystroglycan (DAG1), which is required for binding laminin G-like domain-containing extracellular proteins with high affinity. The sequence is that of Protein O-linked-mannose beta-1,4-N-acetylglucosaminyltransferase 2 (POMGNT2) from Pan troglodytes (Chimpanzee).